The sequence spans 551 residues: Lysine--tRNA ligase (551 aa).

Positions 54–62 (PSGLPHIGT) match the 'HIGH' region motif. Residues 303–307 (KISKS) carry the 'KMSKS' region motif. An ATP-binding site is contributed by Lys-306.

Belongs to the class-I aminoacyl-tRNA synthetase family.

Its subcellular location is the cytoplasm. The enzyme catalyses tRNA(Lys) + L-lysine + ATP = L-lysyl-tRNA(Lys) + AMP + diphosphate. The polypeptide is Lysine--tRNA ligase (Brucella melitensis biotype 1 (strain ATCC 23456 / CCUG 17765 / NCTC 10094 / 16M)).